The sequence spans 426 residues: Limonoid 21-O-acetyltransferse (426 aa).

Active-site proton acceptor residues include His152 and Asp365.

It belongs to the plant acyltransferase family. Monomer. In terms of tissue distribution, expressed in maturing fruits and in juice vesicles.

The catalysed reaction is isomeliandiol + acetyl-CoA = 21-O-acetyl-isomeliandiol + CoA. Its pathway is secondary metabolite biosynthesis; terpenoid biosynthesis. Acetyltransferase involved in the biosynthesis of limonoids triterpene natural products such as limonin, a compound with insecticidal activity responsible for the bitter taste in citrus. Catalyzes the formation of 21-O-acetyl-isomeliandiol from isomeliandiol. The chain is Limonoid 21-O-acetyltransferse from Citrus sinensis (Sweet orange).